The following is a 271-amino-acid chain: uncharacterized protein (271 aa).

It belongs to the HAD-like hydrolase superfamily.

This is an uncharacterized protein from Staphylococcus aureus (strain MRSA252).